The following is a 351-amino-acid chain: Anthranilate phosphoribosyltransferase (351 aa).

Residues G80, 83–84 (GD), T88, 90–93 (NIST), 108–116 (KHGNRSVTS), and S120 each bind 5-phospho-alpha-D-ribose 1-diphosphate. G80 is an anthranilate binding site. S92 contacts Mg(2+). Residue N111 participates in anthranilate binding. R166 provides a ligand contact to anthranilate. Residues D229 and E230 each contribute to the Mg(2+) site.

This sequence belongs to the anthranilate phosphoribosyltransferase family. As to quaternary structure, homodimer. It depends on Mg(2+) as a cofactor.

It carries out the reaction N-(5-phospho-beta-D-ribosyl)anthranilate + diphosphate = 5-phospho-alpha-D-ribose 1-diphosphate + anthranilate. It participates in amino-acid biosynthesis; L-tryptophan biosynthesis; L-tryptophan from chorismate: step 2/5. Functionally, catalyzes the transfer of the phosphoribosyl group of 5-phosphorylribose-1-pyrophosphate (PRPP) to anthranilate to yield N-(5'-phosphoribosyl)-anthranilate (PRA). The sequence is that of Anthranilate phosphoribosyltransferase from Chlorobium phaeovibrioides (strain DSM 265 / 1930) (Prosthecochloris vibrioformis (strain DSM 265)).